The sequence spans 155 residues: Ribosomal RNA large subunit methyltransferase H (155 aa).

Residues Leu-72, Gly-103, and 122–127 (LSDLTL) contribute to the S-adenosyl-L-methionine site.

Belongs to the RNA methyltransferase RlmH family. Homodimer.

The protein resides in the cytoplasm. It carries out the reaction pseudouridine(1915) in 23S rRNA + S-adenosyl-L-methionine = N(3)-methylpseudouridine(1915) in 23S rRNA + S-adenosyl-L-homocysteine + H(+). Specifically methylates the pseudouridine at position 1915 (m3Psi1915) in 23S rRNA. In Albidiferax ferrireducens (strain ATCC BAA-621 / DSM 15236 / T118) (Rhodoferax ferrireducens), this protein is Ribosomal RNA large subunit methyltransferase H.